A 329-amino-acid polypeptide reads, in one-letter code: Probable alpha-1,2-galactosyltransferase gmh1 (329 aa).

Residues Met1–Lys14 are Cytoplasmic-facing. A helical; Signal-anchor for type II membrane protein transmembrane segment spans residues Leu15–Pro35. The Lumenal portion of the chain corresponds to His36–Ile329. N-linked (GlcNAc...) asparagine glycans are attached at residues Asn127 and Asn169.

The protein belongs to the glycosyltransferase 34 family.

The protein resides in the golgi apparatus membrane. The chain is Probable alpha-1,2-galactosyltransferase gmh1 (gmh1) from Schizosaccharomyces pombe (strain 972 / ATCC 24843) (Fission yeast).